Consider the following 460-residue polypeptide: Probable protein phosphatase 2C 38 (460 aa).

Disordered stretches follow at residues 1–30 (MVAV…AVPS) and 83–111 (RPMR…GRIA). Residues 100 to 109 (PRDREPRDGR) show a composition bias toward basic and acidic residues. In terms of domain architecture, PPM-type phosphatase spans 118-432 (AASLYTMRGN…DDCAVVCLFL (315 aa)). Mn(2+)-binding residues include Asp154 and Gly155. Positions 192–219 (VTSSMTEGGGTERMDRDTETPLGTEENG) are disordered. The segment covering 201 to 210 (GTERMDRDTE) has biased composition (basic and acidic residues). Mn(2+) is bound by residues Asp377 and Asp423.

The protein belongs to the PP2C family. Requires Mg(2+) as cofactor. Mn(2+) serves as cofactor.

It catalyses the reaction O-phospho-L-seryl-[protein] + H2O = L-seryl-[protein] + phosphate. The enzyme catalyses O-phospho-L-threonyl-[protein] + H2O = L-threonyl-[protein] + phosphate. The chain is Probable protein phosphatase 2C 38 from Oryza sativa subsp. japonica (Rice).